The primary structure comprises 935 residues: Pre-mRNA-splicing factor CWC22 homolog (935 aa).

The segment at 1–179 (MSRSPSPDSP…PKDLLRTRTG (179 aa)) is disordered. 2 stretches are compositionally biased toward basic and acidic residues: residues 13-25 (VRDD…REQS) and 49-70 (ESSR…DEKM). Residues 84-148 (QHRRHRESRS…RSPARRRSPV (65 aa)) show a composition bias toward basic residues. Positions 159 to 175 (PTEEPEKKKNDPKDLLR) are enriched in basic and acidic residues. One can recognise an MIF4G domain in the interval 212-400 (KKKIHGLVNR…ETAMQIRKDK (189 aa)). The disordered stretch occupies residues 463–489 (ADISSDEEEEVEDDDEESEAEEAPRKT). Residues 465–483 (ISSDEEEEVEDDDEESEAE) are compositionally biased toward acidic residues. An MI domain is found at 502 to 633 (AFRREVYLTL…EWKILADVKM (132 aa)). The interval 725-935 (KAAQSSSDSS…VGSDDRRRRH (211 aa)) is disordered. Residues 729–763 (SSSDSSSDSSDSSDSSDSSGSSDSSDDSSSSSSSD) show a composition bias toward low complexity. 2 stretches are compositionally biased toward basic and acidic residues: residues 780–891 (KKKE…DRKE) and 897–935 (DRRD…RRRH).

It belongs to the CWC22 family.

The protein localises to the nucleus. It localises to the nucleus speckle. Functionally, required for early embryogenesis and tissue differentiation. Required for pre-mRNA splicing and for exon-junction complex (EJC) assembly. Hinders EIF4A3 from non-specifically binding RNA and escorts it to the splicing machinery to promote EJC assembly on mature mRNAs. Through its role in EJC assembly, required for nonsense-mediated mRNA decay. The sequence is that of Pre-mRNA-splicing factor CWC22 homolog from Caenorhabditis briggsae.